We begin with the raw amino-acid sequence, 200 residues long: Holliday junction branch migration complex subunit RuvA (200 aa).

The domain I stretch occupies residues 1-64; the sequence is MYAYFRGELI…EDLMQLYGFI (64 aa). The interval 65–143 is domain II; it reads EEEERQLFLL…KLQQTRPGKT (79 aa). The segment at 144–154 is flexible linker; that stretch reads AGAGSVASLSE. The segment at 154–200 is domain III; sequence EDALQALMTLGFSRASAQQAVTRALLSAENPGVEDIVREALQNIRNH.

This sequence belongs to the RuvA family. In terms of assembly, homotetramer. Forms an RuvA(8)-RuvB(12)-Holliday junction (HJ) complex. HJ DNA is sandwiched between 2 RuvA tetramers; dsDNA enters through RuvA and exits via RuvB. An RuvB hexamer assembles on each DNA strand where it exits the tetramer. Each RuvB hexamer is contacted by two RuvA subunits (via domain III) on 2 adjacent RuvB subunits; this complex drives branch migration. In the full resolvosome a probable DNA-RuvA(4)-RuvB(12)-RuvC(2) complex forms which resolves the HJ.

The protein localises to the cytoplasm. In terms of biological role, the RuvA-RuvB-RuvC complex processes Holliday junction (HJ) DNA during genetic recombination and DNA repair, while the RuvA-RuvB complex plays an important role in the rescue of blocked DNA replication forks via replication fork reversal (RFR). RuvA specifically binds to HJ cruciform DNA, conferring on it an open structure. The RuvB hexamer acts as an ATP-dependent pump, pulling dsDNA into and through the RuvAB complex. HJ branch migration allows RuvC to scan DNA until it finds its consensus sequence, where it cleaves and resolves the cruciform DNA. The protein is Holliday junction branch migration complex subunit RuvA of Prosthecochloris aestuarii (strain DSM 271 / SK 413).